Reading from the N-terminus, the 325-residue chain is Putative [LysW]-lysine/[LysW]-ornithine hydrolase (325 aa).

Position 66 (His-66) interacts with Zn(2+). Asp-68 is an active-site residue. Position 90 (Asp-90) interacts with Zn(2+). The active-site Proton acceptor is the Glu-117. The Zn(2+) site is built by Glu-118, Glu-139, and His-297.

The protein belongs to the peptidase M20A family. LysK subfamily. Zn(2+) is required as a cofactor. Co(2+) serves as cofactor.

It is found in the cytoplasm. The catalysed reaction is [amino-group carrier protein]-C-terminal-gamma-(L-lysyl)-L-glutamate + H2O = [amino-group carrier protein]-C-terminal-L-glutamate + L-lysine. The enzyme catalyses [amino-group carrier protein]-C-terminal-gamma-(L-ornithyl)-L-glutamate + H2O = [amino-group carrier protein]-C-terminal-L-glutamate + L-ornithine. It participates in amino-acid biosynthesis; L-lysine biosynthesis via AAA pathway; L-lysine from L-alpha-aminoadipate (Thermus route): step 5/5. Its pathway is amino-acid biosynthesis; L-arginine biosynthesis. In terms of biological role, catalyzes the release of L-lysine from [LysW]-gamma-L-lysine and the release of L-ornithine from [LysW]-L-ornithine. The chain is Putative [LysW]-lysine/[LysW]-ornithine hydrolase from Pyrococcus horikoshii (strain ATCC 700860 / DSM 12428 / JCM 9974 / NBRC 100139 / OT-3).